A 246-amino-acid chain; its full sequence is 1-(5-phosphoribosyl)-5-[(5-phosphoribosylamino)methylideneamino] imidazole-4-carboxamide isomerase (246 aa).

The active-site Proton acceptor is the D7. D130 acts as the Proton donor in catalysis.

Belongs to the HisA/HisF family.

It localises to the cytoplasm. The enzyme catalyses 1-(5-phospho-beta-D-ribosyl)-5-[(5-phospho-beta-D-ribosylamino)methylideneamino]imidazole-4-carboxamide = 5-[(5-phospho-1-deoxy-D-ribulos-1-ylimino)methylamino]-1-(5-phospho-beta-D-ribosyl)imidazole-4-carboxamide. Its pathway is amino-acid biosynthesis; L-histidine biosynthesis; L-histidine from 5-phospho-alpha-D-ribose 1-diphosphate: step 4/9. The sequence is that of 1-(5-phosphoribosyl)-5-[(5-phosphoribosylamino)methylideneamino] imidazole-4-carboxamide isomerase from Blochmanniella pennsylvanica (strain BPEN).